The sequence spans 273 residues: MLIEVDNIIDEIKAEISSLKEKVPYEPKLVSLVVEPDESTKSYLNSQKRNAKKFGINLEIVESNDLTNDLRKYNEDDDTDAIFIARPLKKGYTELDIAKYINPEKDVEGVSLHNIGSMFYEKELFVPCTAEAVVKIIEDTTDVRGKNIVILGRSTTVGKPAAIMLQRHGRDATVTVTHTKTKNLKEITKEADILVAAIGKANFVDSTFVKEGMIVIDVGINVVDGKIVGDVNKDVSEICQLTPVPGGVGSVTTAILMRNVFRAANNKKGDMQL.

Residues G152–S154, T179, and I220 contribute to the NADP(+) site.

This sequence belongs to the tetrahydrofolate dehydrogenase/cyclohydrolase family. In terms of assembly, homodimer.

It carries out the reaction (6R)-5,10-methylene-5,6,7,8-tetrahydrofolate + NADP(+) = (6R)-5,10-methenyltetrahydrofolate + NADPH. It catalyses the reaction (6R)-5,10-methenyltetrahydrofolate + H2O = (6R)-10-formyltetrahydrofolate + H(+). Its pathway is one-carbon metabolism; tetrahydrofolate interconversion. Its function is as follows. Catalyzes the oxidation of 5,10-methylenetetrahydrofolate to 5,10-methenyltetrahydrofolate and then the hydrolysis of 5,10-methenyltetrahydrofolate to 10-formyltetrahydrofolate. The sequence is that of Bifunctional protein FolD from Petrotoga mobilis (strain DSM 10674 / SJ95).